A 473-amino-acid polypeptide reads, in one-letter code: MPAIAEPYRIKMVEPITMTTREQREAAIRAAGYNTFLLRSDDVYIDLLTDSGTSAMSDRQWSAMMMGDEAYAGARSFDHLVESVRENYGFPLVCPTHQGRGAEHLISKILITPGQHVPGNMYFTTTRVHQELAGGTFHDVIIDEAHDPASRHPFKGNVDLDKFQALIDEVGADQIAYINVAVTVNMAGGQPVSMANIRAVREICDRYGIILWSDATRLAENAWFIQEREDGYAGRPVAEIVREMLSHFDGITMSGKKDCLVNIGGFLAMRDEAILTKARELVVVYEGMPTYGGLAGRDLDAMAVGLREALDDDYLTHRIGQVRYLGERLQAAGVPIVEPIGGHAVFIDAAAFLDHLSQDELPAQTLAAEIFLDSGVRSMERGIVSAGRDADGNNRYPKLELVRLTIPRRVYTNSHMDVVADSVIRVFQRRREIQGLTFVYESPTLRFFTSRFEPLAAEAALEEGRPEPALAGA.

Lysine 257 is modified (N6-(pyridoxal phosphate)lysine).

This sequence belongs to the beta-eliminating lyase family. As to quaternary structure, homotetramer. Pyridoxal 5'-phosphate serves as cofactor.

It catalyses the reaction L-tyrosine + H2O = phenol + pyruvate + NH4(+). This chain is Tyrosine phenol-lyase, found in Intrasporangium calvum (strain ATCC 23552 / DSM 43043 / JCM 3097 / NBRC 12989 / NCIMB 10167 / NRRL B-3866 / 7 KIP).